The following is a 701-amino-acid chain: Elongation factor G (701 aa).

Residues 6 to 285 (HKVRNIGIMA…AVVAYLPNPL (280 aa)) form the tr-type G domain. GTP-binding positions include 15–22 (AHIDAGKT), 79–83 (DNPGH), and 133–136 (NKMD).

Belongs to the TRAFAC class translation factor GTPase superfamily. Classic translation factor GTPase family. EF-G/EF-2 subfamily.

The protein resides in the cytoplasm. Catalyzes the GTP-dependent ribosomal translocation step during translation elongation. During this step, the ribosome changes from the pre-translocational (PRE) to the post-translocational (POST) state as the newly formed A-site-bound peptidyl-tRNA and P-site-bound deacylated tRNA move to the P and E sites, respectively. Catalyzes the coordinated movement of the two tRNA molecules, the mRNA and conformational changes in the ribosome. The protein is Elongation factor G (fusA) of Micrococcus luteus (Micrococcus lysodeikticus).